The primary structure comprises 159 residues: 2-C-methyl-D-erythritol 2,4-cyclodiphosphate synthase (159 aa).

Residues Asp10 and His12 each contribute to the a divalent metal cation site. Residues 10–12 (DVH) and 36–37 (HS) each bind 4-CDP-2-C-methyl-D-erythritol 2-phosphate. Residue His44 coordinates a divalent metal cation. 4-CDP-2-C-methyl-D-erythritol 2-phosphate-binding positions include 58–60 (DIG), 63–67 (FPDTD), 102–108 (AQAPKMA), 134–137 (TTTE), Phe141, and Arg144.

Belongs to the IspF family. As to quaternary structure, homotrimer. A divalent metal cation serves as cofactor.

It catalyses the reaction 4-CDP-2-C-methyl-D-erythritol 2-phosphate = 2-C-methyl-D-erythritol 2,4-cyclic diphosphate + CMP. It participates in isoprenoid biosynthesis; isopentenyl diphosphate biosynthesis via DXP pathway; isopentenyl diphosphate from 1-deoxy-D-xylulose 5-phosphate: step 4/6. In terms of biological role, involved in the biosynthesis of isopentenyl diphosphate (IPP) and dimethylallyl diphosphate (DMAPP), two major building blocks of isoprenoid compounds. Catalyzes the conversion of 4-diphosphocytidyl-2-C-methyl-D-erythritol 2-phosphate (CDP-ME2P) to 2-C-methyl-D-erythritol 2,4-cyclodiphosphate (ME-CPP) with a corresponding release of cytidine 5-monophosphate (CMP). This is 2-C-methyl-D-erythritol 2,4-cyclodiphosphate synthase from Shewanella sp. (strain ANA-3).